The chain runs to 47 residues: Small, acid-soluble spore protein K (47 aa).

Residues 1 to 47 (MRNKAHGFPHRISFDGEPDRAKHASKRANGTINTKPQERMHQANPDQ) are disordered. Residues 12–22 (ISFDGEPDRAK) show a composition bias toward basic and acidic residues.

The protein belongs to the SspK family.

Its subcellular location is the spore core. In Halalkalibacterium halodurans (strain ATCC BAA-125 / DSM 18197 / FERM 7344 / JCM 9153 / C-125) (Bacillus halodurans), this protein is Small, acid-soluble spore protein K.